The following is a 199-amino-acid chain: MSLFALFYMLFAYLLGSISSAILICRIAGLPDPRQNGSHNPGATNVLRIGNRKSALAVLIFDMLKGMIPVWAGYYLGLTQFELGMVALGACLGHIFPIFFQFKGGKGVATAFGAIAPISWAVAGSMFGTWIFVFLVSGYSSLSAVISALLVPFYVWWFKPEFTFPVALVCCLLIYRHHDNIQRLWRGQEDKVWAKFKKK.

Transmembrane regions (helical) follow at residues 4 to 24 (FALF…AILI), 56 to 76 (LAVL…GYYL), 80 to 100 (QFEL…PIFF), 115 to 135 (IAPI…FVFL), and 154 to 176 (YVWW…LIYR).

It belongs to the PlsY family. In terms of assembly, probably interacts with PlsX.

The protein localises to the cell inner membrane. It carries out the reaction an acyl phosphate + sn-glycerol 3-phosphate = a 1-acyl-sn-glycero-3-phosphate + phosphate. It functions in the pathway lipid metabolism; phospholipid metabolism. In terms of biological role, catalyzes the transfer of an acyl group from acyl-phosphate (acyl-PO(4)) to glycerol-3-phosphate (G3P) to form lysophosphatidic acid (LPA). This enzyme utilizes acyl-phosphate as fatty acyl donor, but not acyl-CoA or acyl-ACP. This chain is Glycerol-3-phosphate acyltransferase, found in Haemophilus influenzae (strain PittGG).